The following is a 171-amino-acid chain: NADH-quinone oxidoreductase subunit B 2 (171 aa).

Residues cysteine 37, cysteine 38, cysteine 102, and cysteine 132 each coordinate [4Fe-4S] cluster.

The protein belongs to the complex I 20 kDa subunit family. As to quaternary structure, NDH-1 is composed of 14 different subunits. Subunits NuoB, C, D, E, F, and G constitute the peripheral sector of the complex. [4Fe-4S] cluster serves as cofactor.

It localises to the cell inner membrane. The enzyme catalyses a quinone + NADH + 5 H(+)(in) = a quinol + NAD(+) + 4 H(+)(out). NDH-1 shuttles electrons from NADH, via FMN and iron-sulfur (Fe-S) centers, to quinones in the respiratory chain. Couples the redox reaction to proton translocation (for every two electrons transferred, four hydrogen ions are translocated across the cytoplasmic membrane), and thus conserves the redox energy in a proton gradient. The protein is NADH-quinone oxidoreductase subunit B 2 of Chromobacterium violaceum (strain ATCC 12472 / DSM 30191 / JCM 1249 / CCUG 213 / NBRC 12614 / NCIMB 9131 / NCTC 9757 / MK).